The sequence spans 159 residues: Serine-protein kinase RsbW (159 aa).

It belongs to the anti-sigma-factor family.

It carries out the reaction L-seryl-[protein] + ATP = O-phospho-L-seryl-[protein] + ADP + H(+). It catalyses the reaction L-threonyl-[protein] + ATP = O-phospho-L-threonyl-[protein] + ADP + H(+). In terms of biological role, negative regulator of sigma-B activity. Phosphorylates and inactivates its specific antagonist protein, RsbV. Upon phosphorylation of RsbV, RsbW is released and binds to sigma-B, thereby blocking its ability to form an RNA polymerase holoenzyme (E-sigma-B). The sequence is that of Serine-protein kinase RsbW from Staphylococcus aureus (strain Newman).